Here is a 267-residue protein sequence, read N- to C-terminus: Strigolactone esterase RMS3 (267 aa).

S96 acts as the Nucleophile in catalysis. Active-site residues include D218 and H247.

The protein belongs to the AB hydrolase superfamily.

Its subcellular location is the cytoplasm. It is found in the nucleus. Its function is as follows. Involved in strigolactone signaling pathway. Functions downstream of strigolactone synthesis, as a component of hormone signaling and as an enzyme that participates in the conversion of strigolactones to the bioactive form. Binds and hydrolyzes the synthetic strigolactone analog GR24 and its enantiomers in vitro. Forms a stable covalent complex with the D-ring of strigolactone, which is essential for hormone bioactivity. The D-ring is attached to His-247 of the catalytic triad. The hydrolysis of strigolactone into a covalently linked intermediate molecule is required to trigger strigolactone signaling. This mechanism defines RMS3 as a non-canonical hormone receptor with dual functions to generate and sense the active form of strigolactone. Strigolactones are hormones that inhibit tillering and shoot branching through the MAX-dependent pathway, contribute to the regulation of shoot architectural response to phosphate-limiting conditions and function as rhizosphere signal that stimulates hyphal branching of arbuscular mycorrhizal fungi and trigger seed germination of root parasitic weeds. The sequence is that of Strigolactone esterase RMS3 from Pisum sativum (Garden pea).